The chain runs to 190 residues: Vexin (190 aa).

Residues 88–156 (AEKKASRFSR…DEATLPLTAH (69 aa)) are disordered. Over residues 117-133 (TDKQNAPTVPASPSSYE) the composition is skewed to polar residues. The span at 136-149 (GCREQRPENPKDEA) shows a compositional bias: basic and acidic residues.

It belongs to the vexin family. As to expression, expressed in differentiating progenitors in the developing central nervous system (CNS).

The protein resides in the cell membrane. It localises to the nucleus. Functionally, required for neurogenesis in the neural plate and retina. Cooperates with cell cycle inhibitor cdknx/p27(xic1) to enhance neurogenesis and increase the levels of the neuronal determination factor neurog2/X-ngngr-1. This Xenopus laevis (African clawed frog) protein is Vexin.